We begin with the raw amino-acid sequence, 363 residues long: Carbamoyl phosphate synthase small chain (363 aa).

Positions 1 to 172 (MKAFLVLDNG…TKYIFGTHTG (172 aa)) are CPSase. 3 residues coordinate L-glutamine: S45, G224, and G226. The Glutamine amidotransferase type-1 domain maps to 176 to 362 (KLAVYDYGVK…YDLVETTKRG (187 aa)). Catalysis depends on C252, which acts as the Nucleophile. Residues L253, Q256, N294, G296, and F297 each coordinate L-glutamine. Residues H335 and E337 contribute to the active site.

It belongs to the CarA family. Composed of two chains; the small (or glutamine) chain promotes the hydrolysis of glutamine to ammonia, which is used by the large (or ammonia) chain to synthesize carbamoyl phosphate. Tetramer of heterodimers (alpha,beta)4.

The catalysed reaction is hydrogencarbonate + L-glutamine + 2 ATP + H2O = carbamoyl phosphate + L-glutamate + 2 ADP + phosphate + 2 H(+). It carries out the reaction L-glutamine + H2O = L-glutamate + NH4(+). It participates in amino-acid biosynthesis; L-arginine biosynthesis; carbamoyl phosphate from bicarbonate: step 1/1. It functions in the pathway pyrimidine metabolism; UMP biosynthesis via de novo pathway; (S)-dihydroorotate from bicarbonate: step 1/3. Its function is as follows. Small subunit of the glutamine-dependent carbamoyl phosphate synthetase (CPSase). CPSase catalyzes the formation of carbamoyl phosphate from the ammonia moiety of glutamine, carbonate, and phosphate donated by ATP, constituting the first step of 2 biosynthetic pathways, one leading to arginine and/or urea and the other to pyrimidine nucleotides. The small subunit (glutamine amidotransferase) binds and cleaves glutamine to supply the large subunit with the substrate ammonia. In Leptospira borgpetersenii serovar Hardjo-bovis (strain L550), this protein is Carbamoyl phosphate synthase small chain.